The sequence spans 368 residues: tRNA-specific 2-thiouridylase MnmA (368 aa).

Residues 12–19 and Met38 contribute to the ATP site; that span reads GMSGGVDS. The tract at residues 98-100 is interaction with target base in tRNA; the sequence is NPD. The active-site Nucleophile is the Cys103. An intrachain disulfide couples Cys103 to Cys200. Gly128 contacts ATP. The interval 150-152 is interaction with tRNA; the sequence is KDQ. Cys200 acts as the Cysteine persulfide intermediate in catalysis. The interval 313-314 is interaction with tRNA; it reads RY.

The protein belongs to the MnmA/TRMU family. As to quaternary structure, interacts with TusE.

It is found in the cytoplasm. The catalysed reaction is S-sulfanyl-L-cysteinyl-[protein] + uridine(34) in tRNA + AH2 + ATP = 2-thiouridine(34) in tRNA + L-cysteinyl-[protein] + A + AMP + diphosphate + H(+). Catalyzes the 2-thiolation of uridine at the wobble position (U34) of tRNA(Lys), tRNA(Glu) and tRNA(Gln), leading to the formation of s(2)U34, the first step of tRNA-mnm(5)s(2)U34 synthesis. Sulfur is provided by IscS, via a sulfur-relay system. Binds ATP and its substrate tRNAs. This Pectobacterium carotovorum subsp. carotovorum (strain PC1) protein is tRNA-specific 2-thiouridylase MnmA.